We begin with the raw amino-acid sequence, 163 residues long: Transcriptional repressor NrdR (163 aa).

A zinc finger spans residues 3-34 (CPKCNYLKSSVVDSRQAEEGNTIRRRRECENC). The ATP-cone domain occupies 49-139 (LLVVKKDGTR…VYRSFKDVDE (91 aa)).

The protein belongs to the NrdR family. Zn(2+) serves as cofactor.

In terms of biological role, negatively regulates transcription of bacterial ribonucleotide reductase nrd genes and operons by binding to NrdR-boxes. The sequence is that of Transcriptional repressor NrdR from Streptococcus mutans serotype c (strain ATCC 700610 / UA159).